Here is a 220-residue protein sequence, read N- to C-terminus: Ribosome maturation factor RimP (220 aa).

Over residues 1–15 the composition is skewed to low complexity; the sequence is MSQRGRATRPTGPTG. Disordered stretches follow at residues 1 to 35 and 184 to 220; these read MSQR…GGDL and PGRV…GEER. Residues 198–220 show a composition bias toward acidic residues; the sequence is DGADGADEAGDFDDDDDVEGEER.

This sequence belongs to the RimP family.

The protein localises to the cytoplasm. Required for maturation of 30S ribosomal subunits. The polypeptide is Ribosome maturation factor RimP (Salinispora tropica (strain ATCC BAA-916 / DSM 44818 / JCM 13857 / NBRC 105044 / CNB-440)).